The sequence spans 177 residues: Putative zinc finger protein 826 (177 aa).

The C2H2-type 1; degenerate zinc finger occupies 99-114; sequence KTFTWSSSPHKHRRTH. The C2H2-type 2; degenerate zinc finger occupies 120–142; it reads YKCEECGKAFTASSTLSEYKTIH. The segment at 148-170 adopts a C2H2-type 3 zinc-finger fold; that stretch reads CKCEECGKAFNWSSDFNKHKRIH.

It is found in the nucleus. In terms of biological role, may be involved in transcriptional regulation. The protein is Putative zinc finger protein 826 (ZNF826P) of Homo sapiens (Human).